We begin with the raw amino-acid sequence, 147 residues long: Large ribosomal subunit protein uL15 (147 aa).

Over residues Met1–Arg13 the composition is skewed to basic and acidic residues. The segment at Met1–Thr58 is disordered. Gly residues-rich tracts occupy residues Arg21–Gln35 and Ser42–Gly52.

The protein belongs to the universal ribosomal protein uL15 family. In terms of assembly, part of the 50S ribosomal subunit.

In terms of biological role, binds to the 23S rRNA. This chain is Large ribosomal subunit protein uL15, found in Thermoanaerobacter sp. (strain X514).